The chain runs to 252 residues: tRNA (guanine-N(1)-)-methyltransferase (252 aa).

S-adenosyl-L-methionine-binding positions include glycine 110 and 130–135 (VGDFVL).

The protein belongs to the RNA methyltransferase TrmD family. As to quaternary structure, homodimer.

The protein localises to the cytoplasm. It carries out the reaction guanosine(37) in tRNA + S-adenosyl-L-methionine = N(1)-methylguanosine(37) in tRNA + S-adenosyl-L-homocysteine + H(+). Its function is as follows. Specifically methylates guanosine-37 in various tRNAs. This Magnetococcus marinus (strain ATCC BAA-1437 / JCM 17883 / MC-1) protein is tRNA (guanine-N(1)-)-methyltransferase.